The following is a 72-amino-acid chain: Translation initiation factor IF-1 (72 aa).

The S1-like domain occupies 2 to 72 (AKEDVIEVEG…TRGRITYRYK (71 aa)). Tyrosine 60 bears the Phosphotyrosine mark.

This sequence belongs to the IF-1 family. As to quaternary structure, component of the 30S ribosomal translation pre-initiation complex which assembles on the 30S ribosome in the order IF-2 and IF-3, IF-1 and N-formylmethionyl-tRNA(fMet); mRNA recruitment can occur at any time during PIC assembly.

It is found in the cytoplasm. One of the essential components for the initiation of protein synthesis. Stabilizes the binding of IF-2 and IF-3 on the 30S subunit to which N-formylmethionyl-tRNA(fMet) subsequently binds. Helps modulate mRNA selection, yielding the 30S pre-initiation complex (PIC). Upon addition of the 50S ribosomal subunit IF-1, IF-2 and IF-3 are released leaving the mature 70S translation initiation complex. The polypeptide is Translation initiation factor IF-1 (Halalkalibacterium halodurans (strain ATCC BAA-125 / DSM 18197 / FERM 7344 / JCM 9153 / C-125) (Bacillus halodurans)).